The sequence spans 78 residues: Large ribosomal subunit protein bL28 (78 aa).

The segment at 1–31 (MAAHCQVTGAEPGFGHSISHSHRRNKRRFDP) is disordered.

The protein belongs to the bacterial ribosomal protein bL28 family.

The chain is Large ribosomal subunit protein bL28 from Arthrobacter sp. (strain FB24).